The following is a 151-amino-acid chain: 3-dehydroquinate dehydratase (151 aa).

Tyr-24 (proton acceptor) is an active-site residue. Positions 76, 82, and 89 each coordinate substrate. His-102 functions as the Proton donor in the catalytic mechanism. Residues 103-104 and Arg-113 contribute to the substrate site; that span reads LS.

This sequence belongs to the type-II 3-dehydroquinase family. Homododecamer.

It catalyses the reaction 3-dehydroquinate = 3-dehydroshikimate + H2O. Its pathway is metabolic intermediate biosynthesis; chorismate biosynthesis; chorismate from D-erythrose 4-phosphate and phosphoenolpyruvate: step 3/7. Its function is as follows. Catalyzes a trans-dehydration via an enolate intermediate. In Acinetobacter baumannii (strain AB307-0294), this protein is 3-dehydroquinate dehydratase.